The primary structure comprises 370 residues: Homoserine kinase (370 aa).

Residues 1 to 34 (MASLCFQSPSKPISYFQPKSNPSPPLFAKVSVFR) constitute a chloroplast transit peptide. Residue 143–154 (LPLGSGLGSSAA) coordinates ATP.

This sequence belongs to the GHMP kinase family. Homoserine kinase subfamily.

Its subcellular location is the plastid. It localises to the chloroplast stroma. The catalysed reaction is L-homoserine + ATP = O-phospho-L-homoserine + ADP + H(+). The protein operates within amino-acid biosynthesis; L-threonine biosynthesis; L-threonine from L-aspartate: step 4/5. Functionally, catalyzes the ATP-dependent phosphorylation of L-homoserine to L-homoserine phosphate. Is specific for L-homoserine and cannot use other substrates such D-serine, L-serine, D-threonine and L-threonine, galactose or D-homoserine in vitro. Required for susceptibility to the downy mildew pathogen Hyaloperonospora parasitica. The chain is Homoserine kinase (HSK) from Arabidopsis thaliana (Mouse-ear cress).